Here is a 481-residue protein sequence, read N- to C-terminus: Protein nucleotidyltransferase YdiU (481 aa).

ATP is bound by residues glycine 85, glycine 87, arginine 88, lysine 108, aspartate 120, glycine 121, arginine 172, and arginine 179. Aspartate 248 functions as the Proton acceptor in the catalytic mechanism. Residues asparagine 249 and aspartate 258 each coordinate Mg(2+). Residue aspartate 258 participates in ATP binding.

Belongs to the SELO family. Mg(2+) serves as cofactor. Requires Mn(2+) as cofactor.

It catalyses the reaction L-seryl-[protein] + ATP = 3-O-(5'-adenylyl)-L-seryl-[protein] + diphosphate. The catalysed reaction is L-threonyl-[protein] + ATP = 3-O-(5'-adenylyl)-L-threonyl-[protein] + diphosphate. The enzyme catalyses L-tyrosyl-[protein] + ATP = O-(5'-adenylyl)-L-tyrosyl-[protein] + diphosphate. It carries out the reaction L-histidyl-[protein] + UTP = N(tele)-(5'-uridylyl)-L-histidyl-[protein] + diphosphate. It catalyses the reaction L-seryl-[protein] + UTP = O-(5'-uridylyl)-L-seryl-[protein] + diphosphate. The catalysed reaction is L-tyrosyl-[protein] + UTP = O-(5'-uridylyl)-L-tyrosyl-[protein] + diphosphate. Its function is as follows. Nucleotidyltransferase involved in the post-translational modification of proteins. It can catalyze the addition of adenosine monophosphate (AMP) or uridine monophosphate (UMP) to a protein, resulting in modifications known as AMPylation and UMPylation. In Cereibacter sphaeroides (strain ATCC 17029 / ATH 2.4.9) (Rhodobacter sphaeroides), this protein is Protein nucleotidyltransferase YdiU.